Here is a 281-residue protein sequence, read N- to C-terminus: MDTQRIKDDEDAIRSALTSLKTATGIPVTMFATVLQDNRLQITQWVGLRTPALQNLVIEPGVGVGGRVVATRRPVGVSDYTRANVISHEKDSAIQDEGLHSIVAVPVIVHREIRGVLYVGVHSAVRLGDTVIEEVTMTARTLEQNLAINSALRRNGVPDGRGSLKANRVMNGAEWEQVRSTHSKLRMLANRVTDEDLRRDLEELCDQMVTPVRIKQTTKLSARELDVLACVALGHTNVEAAEEMGIGAETVKSYLRSVMRKLGAHTRYEAVNAARRIGALP.

The HTH luxR-type domain occupies 213–278 (RIKQTTKLSA…EAVNAARRIG (66 aa)).

In terms of biological role, ramA is a master regulator of acetate metabolism. It positively controls the expression of acnA, aceA, aceB, ack, pta and ramB genes in the presence of acetate. RamA is also a positive regulator of rpf2 gene expression during growth on glucose as the sole carbon source. This chain is HTH-type transcriptional activator RamA, found in Corynebacterium glutamicum (strain ATCC 13032 / DSM 20300 / JCM 1318 / BCRC 11384 / CCUG 27702 / LMG 3730 / NBRC 12168 / NCIMB 10025 / NRRL B-2784 / 534).